Reading from the N-terminus, the 211-residue chain is MADS-box protein AGL72 (211 aa).

Residues 1 to 61 (MVRGKIEIKK…GRLYEFASSD (61 aa)) enclose the MADS-box domain. The K-box domain occupies 88 to 187 (VQGLKKEMVT…LCQVGERPMG (100 aa)).

It localises to the nucleus. In terms of biological role, MADS-box transcription factor that acts with AGL42 and AGL71 in the control of flowering time. Promotes flowering at the shoot apical and axillary meristems. Seems to act through a gibberellin-dependent pathway. Interacts genetically with SOC1 and its expression is directly regulated by SOC1. The polypeptide is MADS-box protein AGL72 (AGL72) (Arabidopsis thaliana (Mouse-ear cress)).